The sequence spans 603 residues: Cholinesterase (603 aa).

A signal peptide spans 1-29; it reads MQTQHTKVTQTHFLLWILLLCMPFGKSHT. Asn86 is a glycosylation site (N-linked (GlcNAc...) asparagine). The cysteines at positions 94 and 121 are disulfide-linked. An N-linked (GlcNAc...) asparagine glycan is attached at Asn135. Residue 145–146 participates in substrate binding; that stretch reads GG. Ser227 acts as the Acyl-ester intermediate in catalysis. Ser227 carries the post-translational modification Phosphoserine. Residue Asn270 is glycosylated (N-linked (GlcNAc...) asparagine). An intrachain disulfide couples Cys281 to Cys292. Glu354 serves as the catalytic Charge relay system. The N-linked (GlcNAc...) asparagine glycan is linked to Asn370. Cys429 and Cys548 are joined by a disulfide. The Charge relay system role is filled by His467. Residues Asn484, Asn510, and Asn515 are each glycosylated (N-linked (GlcNAc...) asparagine).

It belongs to the type-B carboxylesterase/lipase family. Homotetramer; disulfide-linked. Dimer of dimers. Present in most cells except erythrocytes.

It is found in the secreted. It catalyses the reaction an acylcholine + H2O = a carboxylate + choline + H(+). Functionally, esterase with broad substrate specificity. Contributes to the inactivation of the neurotransmitter acetylcholine. Can degrade neurotoxic organophosphate esters. The polypeptide is Cholinesterase (Bche) (Mus musculus (Mouse)).